Here is a 608-residue protein sequence, read N- to C-terminus: Alpha-1,3-galactosidase A (608 aa).

Residues 1–21 (MQRRTFIKSISAMMATSTTLG) form the signal peptide. A lipid anchor (N-palmitoyl cysteine) is attached at Cys-22. Cys-22 is lipidated: S-diacylglycerol cysteine. PbH1 repeat units lie at residues 262–292 (TKNT…KLDN), 318–340 (KGHV…NVHG), 426–448 (PDHV…LLTV), 449–470 (SGKI…KIGS), and 481–507 (VESV…DIVP).

Belongs to the glycosyl hydrolase 110 family. A subfamily.

Its subcellular location is the cell membrane. The catalysed reaction is Hydrolysis of terminal, non-reducing branched (1-&gt;3)-alpha-D-galactosidic residues, producing free D-galactose.. The enzyme catalyses Hydrolysis of terminal, non-reducing alpha-D-galactose residues in alpha-D-galactosides, including galactose oligosaccharides, galactomannans and galactolipids.. In terms of biological role, alpha-galactosidase that specifically removes branched alpha-1,3-linked galactose residues present in blood group B antigens. Has no activity toward linear alpha-1,3-linked galactose residues. The sequence is that of Alpha-1,3-galactosidase A (glaA) from Shewanella woodyi (strain ATCC 51908 / MS32).